Reading from the N-terminus, the 504-residue chain is Putative lipase ATG15 (504 aa).

A topological domain (cytoplasmic) is located at residue Met-1. The helical; Signal-anchor for type II membrane protein transmembrane segment at 2–22 (LGRQVTMLLKVIVAVAVLFVW) threads the bilayer. Residues 23–504 (HRSRDSSRGD…WLGICTDYGV (482 aa)) lie on the Lumenal side of the membrane. N-linked (GlcNAc...) asparagine glycosylation is present at Asn-183. The active-site Charge relay system is the Ser-313. Residues 458 to 484 (EESSSSIASSSQLTSSHSESETLTSTD) are disordered. The segment covering 461–483 (SSSIASSSQLTSSHSESETLTST) has biased composition (low complexity).

This sequence belongs to the AB hydrolase superfamily. Lipase family. In terms of assembly, binds to both phosphatidylinositol (PI) and phosphatidylinositol 3,5-bisphosphate (PIP2).

It is found in the endosome. The protein localises to the multivesicular body membrane. The protein resides in the prevacuolar compartment membrane. It carries out the reaction a triacylglycerol + H2O = a diacylglycerol + a fatty acid + H(+). In terms of biological role, lipase which is essential for lysis of subvacuolar cytoplasm to vacuole targeted bodies and intravacuolar autophagic bodies. Involved in the lysis of intravacuolar multivesicular body (MVB) vesicles. The intravacuolar membrane disintegration by ATG15 is critical to life span extension. The protein is Putative lipase ATG15 (ATG15) of Candida glabrata (strain ATCC 2001 / BCRC 20586 / JCM 3761 / NBRC 0622 / NRRL Y-65 / CBS 138) (Yeast).